A 120-amino-acid chain; its full sequence is Large ribosomal subunit protein uL18 (120 aa).

This sequence belongs to the universal ribosomal protein uL18 family. In terms of assembly, part of the 50S ribosomal subunit; part of the 5S rRNA/L5/L18/L25 subcomplex. Contacts the 5S and 23S rRNAs.

In terms of biological role, this is one of the proteins that bind and probably mediate the attachment of the 5S RNA into the large ribosomal subunit, where it forms part of the central protuberance. The sequence is that of Large ribosomal subunit protein uL18 from Staphylococcus epidermidis (strain ATCC 35984 / DSM 28319 / BCRC 17069 / CCUG 31568 / BM 3577 / RP62A).